The chain runs to 362 residues: MTISTVIAFMSMFLVFVMSGPIVVEGRAFFVFGDSLVDSGNNNYLVTTARADSPPYGIDFPTRRPTGRFSNGLNIPDLISEAIGNEEPPLPYLSPELRGRSLLNGANFASAGIGILNDTGFQFINIIRMYQQLDYFQQYQQRVSRLIGKPQTQRLVSQALVLITVGGNDFVNNYFLFPYSARSRQFTLPDYVRLLISEYKKILLRLNSLGVGRVLVTGAGPLGCAPAELARSGTSNGRCSAELQRAASLYDPQLLQMINELNKKIGRNVFIAANTNQMQEDFLSTPRRYGFVTSKVACCGQGPYNGMGLCTVLSNLCPNRELYVFWDAFHPTEKANRMIVRHILTGTTKYMNPMNLSSALAL.

The N-terminal stretch at 1 to 19 (MTISTVIAFMSMFLVFVMS) is a signal peptide. Residue S35 is the Nucleophile of the active site. An N-linked (GlcNAc...) asparagine glycan is attached at N117. Residues D327 and H330 contribute to the active site. N-linked (GlcNAc...) asparagine glycosylation is present at N355.

Belongs to the 'GDSL' lipolytic enzyme family.

It localises to the secreted. The polypeptide is GDSL esterase/lipase At5g18430 (Arabidopsis thaliana (Mouse-ear cress)).